Consider the following 846-residue polypeptide: Translation initiation factor IF-2 (846 aa).

The tract at residues 94-263 is disordered; that stretch reads QRSPEEIQAE…HGFQNPTGPV (170 aa). Residues 96–135 are compositionally biased toward basic and acidic residues; that stretch reads SPEEIQAEQKRELDERRAAENAARDKVEAEVRQRNEEQAR. 2 stretches are compositionally biased toward low complexity: residues 136-148 and 158-176; these read RQAA…APAP and AAPV…ASED. Composition is skewed to basic and acidic residues over residues 177–206 and 230–239; these read AAAR…RGEA and TTDEESDGAR. Basic residues predominate over residues 240 to 253; that stretch reads RGRGGKSKLKKRNQ. Residues 346–513 form the tr-type G domain; the sequence is SRAPVVTVMG…AVLLQAEILE (168 aa). A G1 region spans residues 355 to 362; the sequence is GHVDHGKT. A GTP-binding site is contributed by 355–362; it reads GHVDHGKT. The tract at residues 380-384 is G2; it reads GITQH. The interval 401 to 404 is G3; that stretch reads DTPG. GTP contacts are provided by residues 401 to 405 and 455 to 458; these read DTPGH and NKID. A G4 region spans residues 455–458; sequence NKID. The segment at 491–493 is G5; it reads SAK.

Belongs to the TRAFAC class translation factor GTPase superfamily. Classic translation factor GTPase family. IF-2 subfamily.

It localises to the cytoplasm. Functionally, one of the essential components for the initiation of protein synthesis. Protects formylmethionyl-tRNA from spontaneous hydrolysis and promotes its binding to the 30S ribosomal subunits. Also involved in the hydrolysis of GTP during the formation of the 70S ribosomal complex. In Pseudomonas putida (strain ATCC 47054 / DSM 6125 / CFBP 8728 / NCIMB 11950 / KT2440), this protein is Translation initiation factor IF-2.